The chain runs to 362 residues: D-alanine--D-alanine ligase (362 aa).

The ATP-grasp domain occupies 134–345 (KILAQRAGVP…YPDLITRLIR (212 aa)). 170–225 (GQLGTSNLFVKPSNQGSSVGITHVTDDSNYAEALAEAFKYDDKVLVEEGIVGTEVE) is an ATP binding site. Residues D298, E312, and N314 each coordinate Mg(2+).

It belongs to the D-alanine--D-alanine ligase family. Mg(2+) is required as a cofactor. Requires Mn(2+) as cofactor.

It is found in the cytoplasm. It carries out the reaction 2 D-alanine + ATP = D-alanyl-D-alanine + ADP + phosphate + H(+). It functions in the pathway cell wall biogenesis; peptidoglycan biosynthesis. Its function is as follows. Cell wall formation. This is D-alanine--D-alanine ligase from Lactobacillus delbrueckii subsp. bulgaricus (strain ATCC BAA-365 / Lb-18).